A 232-amino-acid polypeptide reads, in one-letter code: Transcriptional regulatory protein CpxR (232 aa).

In terms of domain architecture, Response regulatory spans 3–115; that stretch reads KILLVDDDRE…ELVARIRAIL (113 aa). Residue Asp51 is modified to 4-aspartylphosphate. A DNA-binding region (ompR/PhoB-type) is located at residues 131 to 230; sequence SPTLEVDALV…LRGRGYLMVS (100 aa).

Post-translationally, phosphorylated by CpxA.

The protein resides in the cytoplasm. Member of the two-component regulatory system CpxA/CpxR. This system combats a variety of extracytoplasmic protein-mediated toxicities. It performs this function by increasing the synthesis of the periplasmic protease, DegP as well as that of CpxP protein. The chain is Transcriptional regulatory protein CpxR (cpxR) from Escherichia coli O157:H7.